The primary structure comprises 553 residues: Formate--tetrahydrofolate ligase (553 aa).

62 to 69 is a binding site for ATP; it reads TPAGEGKS.

Belongs to the formate--tetrahydrofolate ligase family.

It carries out the reaction (6S)-5,6,7,8-tetrahydrofolate + formate + ATP = (6R)-10-formyltetrahydrofolate + ADP + phosphate. Its pathway is one-carbon metabolism; tetrahydrofolate interconversion. The protein is Formate--tetrahydrofolate ligase of Pediococcus pentosaceus (strain ATCC 25745 / CCUG 21536 / LMG 10740 / 183-1w).